Here is a 115-residue protein sequence, read N- to C-terminus: NADH-ubiquinone oxidoreductase chain 3 (115 aa).

Helical transmembrane passes span 4–24 (IVIL…AFWL), 55–75 (FFLI…LLPL), and 84–104 (TYFT…GLMY).

Belongs to the complex I subunit 3 family. In terms of assembly, core subunit of respiratory chain NADH dehydrogenase (Complex I) which is composed of 45 different subunits. Interacts with TMEM186. Interacts with TMEM242.

It is found in the mitochondrion inner membrane. The enzyme catalyses a ubiquinone + NADH + 5 H(+)(in) = a ubiquinol + NAD(+) + 4 H(+)(out). Its function is as follows. Core subunit of the mitochondrial membrane respiratory chain NADH dehydrogenase (Complex I) which catalyzes electron transfer from NADH through the respiratory chain, using ubiquinone as an electron acceptor. Essential for the catalytic activity of complex I. The polypeptide is NADH-ubiquinone oxidoreductase chain 3 (Eligmodontia typus (Highland gerbil mouse)).